The primary structure comprises 104 residues: uncharacterized protein (104 aa).

Residues 24-69 adopt a coiled-coil conformation; the sequence is VIKQIIEKYNDKVKELDTLKNQYQNLQQDYENLKQQVSLQRQTMIS.

This is an uncharacterized protein from Acanthamoeba polyphaga mimivirus (APMV).